Reading from the N-terminus, the 215-residue chain is MPPTAPPEKMMFQLTLRRRGISDQAVLRTMEEVPREEFVLPADRAEAYRDSAMAIACGQTISQPFVVAYMTEQLKLQKNHRVLEIGTGSGYQAAILSRLCANVLTVERFRTLADKARERLEKLNCFNVEVMLGDGYALPPGAGQFDRIIVTAAMDQIPQSLLDRLEPDGILIAPVGPQHGVQTLVRVTRTGDHFDRKELVDVRFVPAIPGIAREL.

S62 is an active-site residue.

It belongs to the methyltransferase superfamily. L-isoaspartyl/D-aspartyl protein methyltransferase family.

It is found in the cytoplasm. It catalyses the reaction [protein]-L-isoaspartate + S-adenosyl-L-methionine = [protein]-L-isoaspartate alpha-methyl ester + S-adenosyl-L-homocysteine. Functionally, catalyzes the methyl esterification of L-isoaspartyl residues in peptides and proteins that result from spontaneous decomposition of normal L-aspartyl and L-asparaginyl residues. It plays a role in the repair and/or degradation of damaged proteins. The protein is Protein-L-isoaspartate O-methyltransferase of Bradyrhizobium sp. (strain BTAi1 / ATCC BAA-1182).